Consider the following 334-residue polypeptide: 3-keto-steroid reductase/17-beta-hydroxysteroid dehydrogenase 7 (334 aa).

Topologically, residues 1–229 (MRKVVLITGA…VTCPGVVMTN (229 aa)) are extracellular. 8–15 (TGASSGIG) serves as a coordination point for NAD(+). Asn-37 carries N-linked (GlcNAc...) asparagine glycosylation. Residue Ser-171 coordinates substrate. A glycan (N-linked (GlcNAc...) asparagine) is linked at Asn-178. Tyr-193 functions as the Proton acceptor in the catalytic mechanism. Asn-229 carries an N-linked (GlcNAc...) asparagine glycan. Residues 230 to 250 (LTYGILPPFVWTLLLPVIWLL) traverse the membrane as a helical segment. The Cytoplasmic portion of the chain corresponds to 251–334 (RFFAHAFTVT…ITIQKSDHHS (84 aa)).

It belongs to the short-chain dehydrogenases/reductases (SDR) family. ERG27 subfamily. Binds to the short form of prolactin receptor. In terms of processing, phosphorylated. Most abundant in ovaries of pregnant animals.

The protein localises to the endoplasmic reticulum membrane. It carries out the reaction 17beta-estradiol + NADP(+) = estrone + NADPH + H(+). The enzyme catalyses a 3beta-hydroxysteroid + NADP(+) = a 3-oxosteroid + NADPH + H(+). It catalyses the reaction 4alpha-methyl-5alpha-cholest-7-en-3beta-ol + NADP(+) = 4alpha-methyl-5alpha-cholest-7-en-3-one + NADPH + H(+). The catalysed reaction is 4alpha-methyl-5alpha-cholest-8-en-3-one + NADPH + H(+) = 4alpha-methyl-5alpha-cholest-8-en-3beta-ol + NADP(+). It carries out the reaction 3-dehydro-4alpha-methylzymosterol + NADPH + H(+) = 4alpha-methylzymosterol + NADP(+). The enzyme catalyses zymosterone + NADPH + H(+) = zymosterol + NADP(+). It catalyses the reaction 5alpha-cholest-8-en-3-one + NADPH + H(+) = 5alpha-cholest-8-en-3beta-ol + NADP(+). The catalysed reaction is 5alpha-androstane-3beta,17beta-diol + NADP(+) = 17beta-hydroxy-5alpha-androstan-3-one + NADPH + H(+). It carries out the reaction 5alpha-androstane-3alpha,17beta-diol + NADP(+) = 17beta-hydroxy-5alpha-androstan-3-one + NADPH + H(+). The protein operates within steroid biosynthesis; estrogen biosynthesis. Its pathway is steroid biosynthesis; zymosterol biosynthesis; zymosterol from lanosterol: step 5/6. Bifunctional enzyme involved in steroid-hormone metabolism and cholesterol biosynthesis. Catalyzes the NADP(H)-dependent reduction of estrogens and androgens and regulates the biological potency of these steroids. Converts estrone (E1) to a more potent estrogen, 17beta-estradiol (E2). Converts dihydrotestosterone (DHT) to an inactive form. Also participates in the post-squalene cholesterol biosynthesis, as a 3-ketosteroid reductase. This Rattus norvegicus (Rat) protein is 3-keto-steroid reductase/17-beta-hydroxysteroid dehydrogenase 7 (Hsd17b7).